Here is a 183-residue protein sequence, read N- to C-terminus: Glutathione-regulated potassium-efflux system ancillary protein KefG (183 aa).

The protein belongs to the NAD(P)H dehydrogenase (quinone) family. KefG subfamily. As to quaternary structure, interacts with KefB.

It localises to the cell inner membrane. The catalysed reaction is a quinone + NADH + H(+) = a quinol + NAD(+). It catalyses the reaction a quinone + NADPH + H(+) = a quinol + NADP(+). Regulatory subunit of a potassium efflux system that confers protection against electrophiles. Required for full activity of KefB. This Yersinia pestis bv. Antiqua (strain Angola) protein is Glutathione-regulated potassium-efflux system ancillary protein KefG.